Consider the following 1035-residue polypeptide: Teashirt homolog 2 (1035 aa).

Positions 1-92 (MPRRKQQAPK…ESLLSDASDQ (92 aa)) are disordered. Positions 13–42 (AGYAQEEQLKEEEEIKEEEEEEEDSGSVAQ) form a coiled coil. Residues 21–37 (LKEEEEIKEEEEEEEDS) show a composition bias toward acidic residues. 2 stretches are compositionally biased toward polar residues: residues 39–49 (SVAQLQGSNDP) and 66–92 (SYQN…ASDQ). A Glycyl lysine isopeptide (Lys-Gly) (interchain with G-Cter in SUMO2) cross-link involves residue Lys-189. 2 C2H2-type zinc fingers span residues 216–240 (FRCR…ETGH) and 276–300 (LKCM…KTKH). Positions 240–266 (HYQDDNRKKDKLRPTSYSKPRKRAFQD) are disordered. Residues Lys-307 and Lys-316 each participate in a glycyl lysine isopeptide (Lys-Gly) (interchain with G-Cter in SUMO2) cross-link. The C2H2-type 3; atypical zinc-finger motif lies at 381-405 (LKCMECGSSHDTLQQLTTHMMVTGH). Residue Lys-418 forms a Glycyl lysine isopeptide (Lys-Gly) (interchain with G-Cter in SUMO2) linkage. Low complexity predominate over residues 432–450 (SLSDAPSSDSLAPKPSSNS). Residues 432-496 (SLSDAPSSDS…DPLQKPLDPA (65 aa)) are disordered. The span at 460-483 (ELKRESKKEKPEELRTDEKVLKSE) shows a compositional bias: basic and acidic residues. Residues Lys-462, Lys-481, Lys-498, and Lys-602 each participate in a glycyl lysine isopeptide (Lys-Gly) (interchain with G-Cter in SUMO2) cross-link. Disordered stretches follow at residues 600-674 (QVKK…VEPV) and 764-791 (QPID…PQKH). Over residues 601–669 (VKKEPEDKEE…KDGGEKEKAQ (69 aa)) the composition is skewed to basic and acidic residues. Glycyl lysine isopeptide (Lys-Gly) (interchain with G-Cter in SUMO2) cross-links involve residues Lys-801 and Lys-821. Positions 842 to 912 (RKGRQSNWNP…NVKYQLRKTG (71 aa)) form a DNA-binding region, homeobox. The C2H2-type 4 zinc-finger motif lies at 927 to 949 (FYCSDCASQFRTPSTYISHLESH). Over residues 968-977 (VEQEISRVSS) the composition is skewed to low complexity. Disordered regions lie at residues 968–987 (VEQE…TIAG) and 1015–1035 (SKTH…VDEE). Ser-981 is modified (phosphoserine). The segment at 995 to 1018 (FKCKLCCRTFVSKHAVKLHLSKTH) adopts a C2H2-type 5 zinc-finger fold.

Belongs to the teashirt C2H2-type zinc-finger protein family. As to quaternary structure, interacts (via homeobox domain) with APBB1 (via PID domain 1). Sumoylated.

The protein resides in the nucleus. In terms of biological role, probable transcriptional regulator involved in developmental processes. May act as a transcriptional repressor (Potential). This chain is Teashirt homolog 2 (TSHZ2), found in Sus scrofa (Pig).